Consider the following 488-residue polypeptide: Poly(3-hydroxybutyrate) depolymerase (488 aa).

The signal sequence occupies residues 1-27 (MVRRLWRRIAGWLAACVAILCAFPLHA). The Charge relay system role is filled by Ser-166. The Fibronectin type-III domain maps to 346-428 (APTGLAVTAT…AAVSATTKSA (83 aa)).

Belongs to the AB hydrolase superfamily. Lipase family.

The protein resides in the secreted. The catalysed reaction is [(3R)-hydroxybutanoate](n) + H2O = [(3R)-hydroxybutanoate](n-2) + (3R)-hydroxybutanoate dimer + H(+). It catalyses the reaction [(3R)-hydroxybutanoate](n) + H2O = [(3R)-hydroxybutanoate](n-3) + (3R)-hydroxybutanoate trimer + H(+). The enzyme catalyses [(3R)-hydroxybutanoate](n) + H2O = [(3R)-hydroxybutanoate](n-1) + (R)-3-hydroxybutanoate + H(+). It carries out the reaction [(3R)-hydroxybutanoate](n) + H2O = [(3R)-hydroxybutanoate](n-5) + (3R)-hydroxybutanoate pentamer + H(+). The catalysed reaction is [(3R)-hydroxybutanoate](n) + H2O = [(3R)-hydroxybutanoate](n-4) + (3R)-hydroxybutanoate tetramer + H(+). This protein degrades water-insoluble and water-soluble PHB to monomeric D(-)-3-hydroxybutyrate. The sequence is that of Poly(3-hydroxybutyrate) depolymerase from Ralstonia pickettii (Burkholderia pickettii).